The primary structure comprises 950 residues: UvrABC system protein A (950 aa).

42–49 (GLSGSGKS) provides a ligand contact to ATP. The C4-type zinc finger occupies 262–289 (CPVCSYSLPELEPRLFSFNNPMGSCPTC). ABC transporter domains follow at residues 319-596 (WDKR…EKSV) and 616-945 (VNPG…KYLK). An ATP-binding site is contributed by 649–656 (GVSGSGKS). The C4-type zinc-finger motif lies at 748–774 (CEACQGDGVIKVEMHFLPDVYVPCEVC).

Belongs to the ABC transporter superfamily. UvrA family. Forms a heterotetramer with UvrB during the search for lesions.

The protein localises to the cytoplasm. Its function is as follows. The UvrABC repair system catalyzes the recognition and processing of DNA lesions. UvrA is an ATPase and a DNA-binding protein. A damage recognition complex composed of 2 UvrA and 2 UvrB subunits scans DNA for abnormalities. When the presence of a lesion has been verified by UvrB, the UvrA molecules dissociate. The polypeptide is UvrABC system protein A (Neisseria gonorrhoeae).